The following is a 128-amino-acid chain: Con-Ins F2c (128 aa).

Positions 1–24 (MTTSSYFLLVALGLLLYVCRSSFG) are cleaved as a signal peptide. Disulfide bonds link cysteine 29/cysteine 104, cysteine 41/cysteine 107, cysteine 53/cysteine 120, and cysteine 106/cysteine 111. Positions 59–89 (LQGGTGKKRGRASLLRKRRAFLSMLKARAKR) are cleaved as a propeptide — c peptide. Position 115 is a 4-carboxyglutamate; partial (glutamate 115). Serine 127 is modified (serine amide).

This sequence belongs to the insulin family. In terms of assembly, heterodimer of A and B chains; disulfide-linked. As to expression, expressed by the venom gland.

The protein localises to the secreted. This venom insulin facilitates prey capture by rapidly inducing hypoglycemic shock. Intraperitoneal injection of this peptide into zebrafish lowers blood glucose with the same potency than human insulin. In vivo, when applied to water, this peptide reduces overall locomotor activity of zebrafish larvae, observed as a significant decrease in the percentage of time spent swimming and movement frequency. The sequence is that of Con-Ins F2c from Conus floridulus (Cone snail).